Here is a 183-residue protein sequence, read N- to C-terminus: Ribosome-recycling factor (183 aa).

It belongs to the RRF family.

The protein localises to the cytoplasm. Functionally, responsible for the release of ribosomes from messenger RNA at the termination of protein biosynthesis. May increase the efficiency of translation by recycling ribosomes from one round of translation to another. The sequence is that of Ribosome-recycling factor from Clostridium tetani (strain Massachusetts / E88).